The primary structure comprises 148 residues: Putative HTH-type transcriptional regulator NMA1593 (148 aa).

The HTH rrf2-type domain maps to 2 to 131 (RLTTKGRFAV…GSVTLQSIIE (130 aa)).

The polypeptide is Putative HTH-type transcriptional regulator NMA1593 (Neisseria meningitidis serogroup A / serotype 4A (strain DSM 15465 / Z2491)).